Here is a 539-residue protein sequence, read N- to C-terminus: Glucans biosynthesis protein D (539 aa).

A signal peptide (tat-type signal) is located at residues 1-29; that stretch reads MNRRNLLKASMALAAYGSVSASGLFAARA.

Belongs to the OpgD/OpgG family. Predicted to be exported by the Tat system. The position of the signal peptide cleavage has not been experimentally proven.

It is found in the periplasm. It participates in glycan metabolism; osmoregulated periplasmic glucan (OPG) biosynthesis. Probably involved in the control of the structural glucose backbone of osmoregulated periplasmic glucans (OPGs). The chain is Glucans biosynthesis protein D from Pseudomonas syringae pv. syringae (strain B728a).